The primary structure comprises 1131 residues: DNA-directed RNA polymerase subunit beta (1131 aa).

The segment at 1108 to 1131 (QLARRTPPRPTYESLSRESLDDDE) is disordered. The span at 1122 to 1131 (LSRESLDDDE) shows a compositional bias: basic and acidic residues.

Belongs to the RNA polymerase beta chain family. As to quaternary structure, in cyanobacteria the RNAP catalytic core is composed of 2 alpha, 1 beta, 1 beta', 1 gamma and 1 omega subunit. When a sigma factor is associated with the core the holoenzyme is formed, which can initiate transcription.

The enzyme catalyses RNA(n) + a ribonucleoside 5'-triphosphate = RNA(n+1) + diphosphate. Its function is as follows. DNA-dependent RNA polymerase catalyzes the transcription of DNA into RNA using the four ribonucleoside triphosphates as substrates. This chain is DNA-directed RNA polymerase subunit beta, found in Nostoc sp. (strain PCC 7120 / SAG 25.82 / UTEX 2576).